Consider the following 331-residue polypeptide: Tetraacyldisaccharide 4'-kinase (331 aa).

57-64 (SVGGNGKT) lines the ATP pocket.

It belongs to the LpxK family.

The enzyme catalyses a lipid A disaccharide + ATP = a lipid IVA + ADP + H(+). The protein operates within glycolipid biosynthesis; lipid IV(A) biosynthesis; lipid IV(A) from (3R)-3-hydroxytetradecanoyl-[acyl-carrier-protein] and UDP-N-acetyl-alpha-D-glucosamine: step 6/6. Its function is as follows. Transfers the gamma-phosphate of ATP to the 4'-position of a tetraacyldisaccharide 1-phosphate intermediate (termed DS-1-P) to form tetraacyldisaccharide 1,4'-bis-phosphate (lipid IVA). This is Tetraacyldisaccharide 4'-kinase from Histophilus somni (strain 2336) (Haemophilus somnus).